The chain runs to 94 residues: Small ubiquitin-related modifier 3-like (94 aa).

Residue Lys-11 forms a Glycyl lysine isopeptide (Lys-Gly) (interchain with G-Cter in SUMO) linkage. The Ubiquitin-like domain maps to 15–92; it reads DHINLKVAGQ…IDVFQQQTGG (78 aa). Residue Gly-92 forms a Glycyl lysine isopeptide (Gly-Lys) (interchain with K-? in acceptor proteins) linkage. A propeptide spanning residues 93–94 is cleaved from the precursor; it reads SC.

The protein belongs to the ubiquitin family. SUMO subfamily. As to quaternary structure, interacts with sae2 and ube2i. Covalently attached to a number of proteins. In terms of processing, polymeric chains can be formed through Lys-11 cross-linking. Cleavage of precursor form by a sentrin-specific protease is necessary for function.

It is found in the cytoplasm. The protein localises to the nucleus. Its subcellular location is the PML body. Ubiquitin-like protein which can be covalently attached to target lysines either as a monomer or as a lysine-linked polymer. Does not seem to be involved in protein degradation and may function as an antagonist of ubiquitin in the degradation process. Plays a role in a number of cellular processes such as nuclear transport, DNA replication and repair, mitosis and signal transduction. Covalent attachment to its substrates requires prior activation by the E1 complex sae1-sae2 and linkage to the E2 enzyme ube2i. The protein is Small ubiquitin-related modifier 3-like (sumo3l) of Danio rerio (Zebrafish).